Reading from the N-terminus, the 155-residue chain is Nascent polypeptide-associated complex subunit beta (155 aa).

Disordered regions lie at residues 1–39 (MDQAKLARLQQSVRIGTGKGTPRRKTKKVHKSSGTDDKK) and 122–155 (QNMQKKEGEAKKEGEEDDEDIPDLVGETFESKVE). Basic residues predominate over residues 21–31 (TPRRKTKKVHK). Residues 34-99 (GTDDKKLQTS…GEEKELTELV (66 aa)) enclose the NAC-A/B domain. Positions 125 to 135 (QKKEGEAKKEG) are enriched in basic and acidic residues.

This sequence belongs to the NAC-beta family. In terms of assembly, part of the nascent polypeptide-associated complex (NAC), consisting of EGD2 and EGD1. NAC associates with ribosomes via EGD1.

Its subcellular location is the cytoplasm. It localises to the nucleus. Its function is as follows. Component of the nascent polypeptide-associated complex (NAC), a dynamic component of the ribosomal exit tunnel, protecting the emerging polypeptides from interaction with other cytoplasmic proteins to ensure appropriate nascent protein targeting. The NAC complex also promotes mitochondrial protein import by enhancing productive ribosome interactions with the outer mitochondrial membrane and blocks the inappropriate interaction of ribosomes translating non-secretory nascent polypeptides with translocation sites in the membrane of the endoplasmic reticulum. EGD1 may act as a transcription factor that exert a negative effect on the expression of several genes that are transcribed by RNA polymerase II. The sequence is that of Nascent polypeptide-associated complex subunit beta (EGD1) from Coccidioides immitis (strain RS) (Valley fever fungus).